Here is a 412-residue protein sequence, read N- to C-terminus: Double C2-like domain-containing protein beta (412 aa).

A negatively regulates targeting to plasma membrane region spans residues 1 to 36 (MTLRRRGEKATISIQEHMAIDVCPGPIRPIKQISDY). The tract at residues 1–90 (MTLRRRGEKA…EDVDQLFGAY (90 aa)) is mediates interaction with DYNLT1. Residues 38-123 (PRFPRGLPPT…PDVDGYESDD (86 aa)) form a disordered region. A compositionally biased stretch (pro residues) spans 43–58 (GLPPTAAPRAPAPPDA). Residues 59-74 (PARSPAASASPRSPSD) show a composition bias toward low complexity. A compositionally biased stretch (pro residues) spans 95-108 (GPSPGPSPARPPAK). Residues 112-123 (DEPDVDGYESDD) are compositionally biased toward acidic residues. C2 domains are found at residues 126–250 (ALGT…SICL) and 266–399 (ERGR…ERWH). Ca(2+)-binding residues include aspartate 157, aspartate 163, aspartate 218, aspartate 220, aspartate 297, aspartate 303, aspartate 357, aspartate 359, and aspartate 365. The segment at 257–375 (DKAEDKSLEE…FIGGVVLGIN (119 aa)) is mediates interaction with STXBP3. A Phosphoserine modification is found at serine 411.

As to quaternary structure, interacts with cytoplasmic dynein light chain DYNLT1. May interact with UNC13A; the interaction mediates targeting to the plasma membrane. Probably interacts with the SNARE (soluble N-ethylmaleimide-sensitive factor attached protein receptor) complex composed of SNAP25, STX1A and VAMP2; the interaction is calcium-dependent and competitive with SYT1. Interacts with STX4; the interaction is calcium-dependent, increased by insulin and glucose, and mediates vesicle fusion with plasma membrane in pancreatic cells and adipocytes. Interacts with STXBP3; the interaction is direct, occurs at the cell membrane and regulates glucose-stimulated insulin secretion. The cofactor is Ca(2+). In terms of tissue distribution, widely expressed. Expressed in pancreatic islet cells (at protein level).

The protein localises to the cytoplasm. It is found in the cytoplasmic granule. Its subcellular location is the cell membrane. Its function is as follows. Calcium sensor which positively regulates SNARE-dependent fusion of vesicles with membranes. Binds phospholipids in a calcium-dependent manner and may act at the priming stage of fusion by modifying membrane curvature to stimulate fusion. Involved in calcium-triggered exocytosis in chromaffin cells and calcium-dependent spontaneous release of neurotransmitter in absence of action potentials in neuronal cells. Involved both in glucose-stimulated insulin secretion in pancreatic cells and insulin-dependent GLUT4 transport to the plasma membrane in adipocytes. The chain is Double C2-like domain-containing protein beta (Doc2b) from Mus musculus (Mouse).